The primary structure comprises 134 residues: Arsenate reductase 2 (134 aa).

Active-site nucleophile residues include C11, C83, and C90. Disulfide bonds link C11-C83 and C83-C90.

Belongs to the low molecular weight phosphotyrosine protein phosphatase family. Thioredoxin-coupled ArsC subfamily.

It localises to the cytoplasm. It carries out the reaction arsenate + [thioredoxin]-dithiol + H(+) = arsenite + [thioredoxin]-disulfide + H2O. Its function is as follows. Catalyzes the reduction of arsenate [As(V)] to arsenite [As(III)]. This is Arsenate reductase 2 from Bacillus cereus (strain ATCC 10987 / NRS 248).